We begin with the raw amino-acid sequence, 505 residues long: 2,3-bisphosphoglycerate-independent phosphoglycerate mutase (505 aa).

Residues Asp12 and Ser62 each contribute to the Mn(2+) site. The active-site Phosphoserine intermediate is the Ser62. Residues His123, Arg153–Asp154, Arg185, Arg191, Arg257–Arg260, and Lys330 each bind substrate. Asp397, His401, Asp438, His439, and His456 together coordinate Mn(2+).

It belongs to the BPG-independent phosphoglycerate mutase family. As to quaternary structure, monomer. Mn(2+) serves as cofactor.

The enzyme catalyses (2R)-2-phosphoglycerate = (2R)-3-phosphoglycerate. It participates in carbohydrate degradation; glycolysis; pyruvate from D-glyceraldehyde 3-phosphate: step 3/5. Functionally, catalyzes the interconversion of 2-phosphoglycerate and 3-phosphoglycerate. The chain is 2,3-bisphosphoglycerate-independent phosphoglycerate mutase from Staphylococcus haemolyticus (strain JCSC1435).